A 508-amino-acid polypeptide reads, in one-letter code: Protein ultraspiracle (508 aa).

The tract at residues 1–103 is modulating; that stretch reads MDNCDQDASF…NHPLSGSKHL (103 aa). Disordered regions lie at residues 21–40 and 55–92; these read PDISQLNDSNNSSFSPKAES and PGSNSASSNNNSAGDAQMAQAPNSAGGSAAAAVQQQYP. A compositionally biased stretch (polar residues) spans 24-35; it reads SQLNDSNNSSFS. The residue at position 35 (Ser35) is a Phosphoserine. Low complexity predominate over residues 57-90; the sequence is SNSASSNNNSAGDAQMAQAPNSAGGSAAAAVQQQ. 2 consecutive NR C4-type zinc fingers follow at residues 104 to 124 and 140 to 164; these read CSICGDRASGKHYGVYSCEGC and CRENRNCIIDKRQRNRCQYCRYQKC. Positions 104-169 form a DNA-binding region, nuclear receptor; sequence CSICGDRASG…RYQKCLTCGM (66 aa). The hinge stretch occupies residues 170 to 223; sequence KREAVQEERQRGARNAAGRLSASGGGSSGPGSVGGSSSQGGGGGGGVSGGMGSG. The tract at residues 178 to 228 is disordered; it reads RQRGARNAAGRLSASGGGSSGPGSVGGSSSQGGGGGGGVSGGMGSGNGSDD. The segment covering 192-224 has biased composition (gly residues); that stretch reads SGGGSSGPGSVGGSSSQGGGGGGGVSGGMGSGN. The 260-residue stretch at 239–498 folds into the NR LBD domain; sequence SIERIIEAEQ…ELFLEQLEAP (260 aa).

Belongs to the nuclear hormone receptor family. NR2 subfamily. Heterodimer of USP and ECR. Only the heterodimer is capable of high-affinity binding to ecdysone.

The protein resides in the nucleus. In terms of biological role, receptor for ecdysone. May be an important modulator of insect metamorphosis. Plays an important part in embryonic and post-embryonic development. Binds to ecdysone response elements (ECRES) such as in the promoter region of s15 chorion gene. In Drosophila melanogaster (Fruit fly), this protein is Protein ultraspiracle (usp).